We begin with the raw amino-acid sequence, 167 residues long: MALSWQSLIDRITNLAKNQRQKKRGTEFLADTVALILFFTTTGIINERMIAGMSWDQVLHARLIGAALMIPVARPYGIWRDWLMQRANPSRGSQLLWDSMALVSFQVPIYAAIIAFSGATGGGLVRGTLGAALMMLFLGRPYGAFLNWVRKLFGLPPGGDKPMSLDS.

4 helical membrane-spanning segments follow: residues 25-45 (GTEFLADTVALILFFTTTGII), 50-70 (IAGMSWDQVLHARLIGAALMI), 105-125 (FQVPIYAAIIAFSGATGGGLV), and 129-149 (LGAALMMLFLGRPYGAFLNWV).

The protein belongs to the AlaE exporter family.

The protein resides in the cell inner membrane. Its function is as follows. Exports L-alanine. This chain is L-alanine exporter AlaE, found in Pantoea sp. (strain At-9b).